The sequence spans 308 residues: Ribosomal RNA small subunit methyltransferase H (308 aa).

Residues 35-37, Asp-54, Phe-80, Asp-101, and Gln-108 contribute to the S-adenosyl-L-methionine site; that span reads GGH.

The protein belongs to the methyltransferase superfamily. RsmH family.

It localises to the cytoplasm. The enzyme catalyses cytidine(1402) in 16S rRNA + S-adenosyl-L-methionine = N(4)-methylcytidine(1402) in 16S rRNA + S-adenosyl-L-homocysteine + H(+). Its function is as follows. Specifically methylates the N4 position of cytidine in position 1402 (C1402) of 16S rRNA. The protein is Ribosomal RNA small subunit methyltransferase H of Mycoplasma pneumoniae (strain ATCC 29342 / M129 / Subtype 1) (Mycoplasmoides pneumoniae).